Here is a 150-residue protein sequence, read N- to C-terminus: MSDYKIWVDADACPNPIKEILFRAAERKALPLVLVANQMIRVPPSPYINQIRVGAGFDVADQYIVDHVEPTHLVITADIPLAALIIEKGALALNPRGELYTVDNIKQKLTMRDFMEDLRGSGVHTGGPDSFSQADKQAFANSLDKWLVRV.

The protein belongs to the UPF0178 family.

The chain is UPF0178 protein Sbal_1771 from Shewanella baltica (strain OS155 / ATCC BAA-1091).